We begin with the raw amino-acid sequence, 251 residues long: Adenosylcobinamide-GDP ribazoletransferase (251 aa).

Helical transmembrane passes span 36-56, 60-80, 110-130, 141-161, 181-201, 202-222, and 231-251; these read LYPF…FVLS, VPIM…TGFL, VGAF…AGMF, VLIF…VSQE, EIIL…TLGI, NYLI…LKVK, and DVAG…LGII.

This sequence belongs to the CobS family. Mg(2+) serves as cofactor.

The protein localises to the cell membrane. It carries out the reaction alpha-ribazole + adenosylcob(III)inamide-GDP = adenosylcob(III)alamin + GMP + H(+). The catalysed reaction is alpha-ribazole 5'-phosphate + adenosylcob(III)inamide-GDP = adenosylcob(III)alamin 5'-phosphate + GMP + H(+). Its pathway is cofactor biosynthesis; adenosylcobalamin biosynthesis; adenosylcobalamin from cob(II)yrinate a,c-diamide: step 7/7. Joins adenosylcobinamide-GDP and alpha-ribazole to generate adenosylcobalamin (Ado-cobalamin). Also synthesizes adenosylcobalamin 5'-phosphate from adenosylcobinamide-GDP and alpha-ribazole 5'-phosphate. The protein is Adenosylcobinamide-GDP ribazoletransferase of Clostridium perfringens (strain 13 / Type A).